Here is a 214-residue protein sequence, read N- to C-terminus: Pyridoxine/pyridoxamine 5'-phosphate oxidase (214 aa).

Residues 9–12 and Lys67 each bind substrate; that span reads RKDY. FMN contacts are provided by residues 62–67, 77–78, Arg83, Lys84, and Gln106; these read RMVLLK and FT. Positions 124, 128, and 132 each coordinate substrate. FMN is bound by residues 141–142 and Trp186; that span reads QS. 192–194 serves as a coordination point for substrate; it reads RLH. Arg196 contributes to the FMN binding site.

This sequence belongs to the pyridoxamine 5'-phosphate oxidase family. In terms of assembly, homodimer. Requires FMN as cofactor.

The enzyme catalyses pyridoxamine 5'-phosphate + O2 + H2O = pyridoxal 5'-phosphate + H2O2 + NH4(+). It catalyses the reaction pyridoxine 5'-phosphate + O2 = pyridoxal 5'-phosphate + H2O2. It participates in cofactor metabolism; pyridoxal 5'-phosphate salvage; pyridoxal 5'-phosphate from pyridoxamine 5'-phosphate: step 1/1. Its pathway is cofactor metabolism; pyridoxal 5'-phosphate salvage; pyridoxal 5'-phosphate from pyridoxine 5'-phosphate: step 1/1. Its function is as follows. Catalyzes the oxidation of either pyridoxine 5'-phosphate (PNP) or pyridoxamine 5'-phosphate (PMP) into pyridoxal 5'-phosphate (PLP). In Nostoc punctiforme (strain ATCC 29133 / PCC 73102), this protein is Pyridoxine/pyridoxamine 5'-phosphate oxidase.